The sequence spans 965 residues: 26S proteasome non-ATPase regulatory subunit 1 (965 aa).

8 PC repeats span residues 380–413 (NAVA…EGFG), 418–452 (GAML…EPVR), 454–488 (GACL…VSGE), 489–523 (SAGI…DKTQ), 560–595 (TGIC…DVKR), 630–664 (GAAM…FVRK), 665–706 (GALL…SLVK), and 708–738 (GAII…DMGS). Residues 836-856 (ASASSAAAAPSSSSTSGTAPA) show a composition bias toward low complexity. 2 disordered regions span residues 836–889 (ASAS…LQNP) and 943–965 (TPAS…INDF). Over residues 863–882 (EVDQPGKSKKEKAPEKDTKP) the composition is skewed to basic and acidic residues.

It belongs to the proteasome subunit S1 family.

Its function is as follows. Acts as a regulatory subunit of the 26 proteasome which is involved in the ATP-dependent degradation of ubiquitinated proteins. In Caenorhabditis elegans, this protein is 26S proteasome non-ATPase regulatory subunit 1 (rpn-2).